Consider the following 335-residue polypeptide: Large ribosomal subunit protein uL3 (335 aa).

The segment at 1–20 (MATIHRPRRGSLAFSPRKRA) is disordered.

It belongs to the universal ribosomal protein uL3 family. In terms of assembly, part of the 50S ribosomal subunit. Forms a cluster with proteins L14 and L24e.

Its function is as follows. One of the primary rRNA binding proteins, it binds directly near the 3'-end of the 23S rRNA, where it nucleates assembly of the 50S subunit. In Methanothrix thermoacetophila (strain DSM 6194 / JCM 14653 / NBRC 101360 / PT) (Methanosaeta thermophila), this protein is Large ribosomal subunit protein uL3.